We begin with the raw amino-acid sequence, 85 residues long: Small ribosomal subunit protein bS18c (85 aa).

This sequence belongs to the bacterial ribosomal protein bS18 family. As to quaternary structure, part of the 30S ribosomal subunit.

The protein localises to the plastid. It is found in the chloroplast. This chain is Small ribosomal subunit protein bS18c, found in Zygnema circumcarinatum (Green alga).